The following is a 701-amino-acid chain: Cytosolic endo-beta-N-acetylglucosaminidase 2 (701 aa).

It belongs to the glycosyl hydrolase 85 family.

It localises to the cytoplasm. Its subcellular location is the cytosol. The enzyme catalyses an N(4)-(oligosaccharide-(1-&gt;3)-[oligosaccharide-(1-&gt;6)]-beta-D-Man-(1-&gt;4)-beta-D-GlcNAc-(1-&gt;4)-alpha-D-GlcNAc)-L-asparaginyl-[protein] + H2O = an oligosaccharide-(1-&gt;3)-[oligosaccharide-(1-&gt;6)]-beta-D-Man-(1-&gt;4)-D-GlcNAc + N(4)-(N-acetyl-beta-D-glucosaminyl)-L-asparaginyl-[protein]. Functionally, endoglycosidase that releases N-glycans from glycoproteins by cleaving the beta-1,4-glycosidic bond in the N,N'-diacetylchitobiose core. Involved in the production of high-mannose type N-glycans during plant development and fruit maturation. This Arabidopsis thaliana (Mouse-ear cress) protein is Cytosolic endo-beta-N-acetylglucosaminidase 2.